Here is a 307-residue protein sequence, read N- to C-terminus: Elongation factor Ts (307 aa).

The tract at residues threonine 80–valine 83 is involved in Mg(2+) ion dislocation from EF-Tu.

The protein belongs to the EF-Ts family.

Its subcellular location is the cytoplasm. Functionally, associates with the EF-Tu.GDP complex and induces the exchange of GDP to GTP. It remains bound to the aminoacyl-tRNA.EF-Tu.GTP complex up to the GTP hydrolysis stage on the ribosome. This Rhodopseudomonas palustris (strain BisA53) protein is Elongation factor Ts.